A 390-amino-acid chain; its full sequence is Alanine racemase (390 aa).

K37 (proton acceptor; specific for D-alanine) is an active-site residue. An N6-(pyridoxal phosphate)lysine modification is found at K37. Residue R135 participates in substrate binding. Y274 serves as the catalytic Proton acceptor; specific for L-alanine. Residue M322 participates in substrate binding.

It belongs to the alanine racemase family. Pyridoxal 5'-phosphate is required as a cofactor.

The catalysed reaction is L-alanine = D-alanine. The protein operates within amino-acid biosynthesis; D-alanine biosynthesis; D-alanine from L-alanine: step 1/1. Catalyzes the interconversion of L-alanine and D-alanine. May also act on other amino acids. The sequence is that of Alanine racemase (alr) from Desulfosudis oleivorans (strain DSM 6200 / JCM 39069 / Hxd3) (Desulfococcus oleovorans).